We begin with the raw amino-acid sequence, 378 residues long: D-alanine--D-alanine ligase (378 aa).

Residues 141 to 347 (KKLLTLNGIR…YSELIDQLIQ (207 aa)) form the ATP-grasp domain. 171-226 (AEELGETLFVKPARQGSSVGIHKVRNEEEYNAALEDGFKYDYKILVEEAIKNPREV) lines the ATP pocket. The Mg(2+) site is built by D301, E314, and N316.

The protein belongs to the D-alanine--D-alanine ligase family. It depends on Mg(2+) as a cofactor. The cofactor is Mn(2+).

It localises to the cytoplasm. It catalyses the reaction 2 D-alanine + ATP = D-alanyl-D-alanine + ADP + phosphate + H(+). It functions in the pathway cell wall biogenesis; peptidoglycan biosynthesis. Its function is as follows. Cell wall formation. The chain is D-alanine--D-alanine ligase from Ligilactobacillus salivarius (strain UCC118) (Lactobacillus salivarius).